We begin with the raw amino-acid sequence, 395 residues long: Elongation factor Tu (395 aa).

In terms of domain architecture, tr-type G spans 10-204 (KPHCNIGTIG…TVDSYIPDPQ (195 aa)). Residues 19-26 (GHVDHGKT) are G1. 19-26 (GHVDHGKT) lines the GTP pocket. Thr-26 contacts Mg(2+). A G2 region spans residues 61–65 (GITIS). The G3 stretch occupies residues 82 to 85 (DCPG). Residues 82–86 (DCPGH) and 137–140 (NKCD) contribute to the GTP site. Residues 137-140 (NKCD) are G4. Residues 173–175 (SAL) are G5.

It belongs to the TRAFAC class translation factor GTPase superfamily. Classic translation factor GTPase family. EF-Tu/EF-1A subfamily. Monomer.

The protein resides in the cytoplasm. It catalyses the reaction GTP + H2O = GDP + phosphate + H(+). GTP hydrolase that promotes the GTP-dependent binding of aminoacyl-tRNA to the A-site of ribosomes during protein biosynthesis. This chain is Elongation factor Tu, found in Agathobacter rectalis (strain ATCC 33656 / DSM 3377 / JCM 17463 / KCTC 5835 / VPI 0990) (Eubacterium rectale).